A 138-amino-acid polypeptide reads, in one-letter code: uncharacterized protein (138 aa).

This is an uncharacterized protein from Thiocystis violacea.